Consider the following 108-residue polypeptide: Pyrimidine/purine nucleoside phosphorylase (108 aa).

The protein belongs to the nucleoside phosphorylase PpnP family.

It carries out the reaction a purine D-ribonucleoside + phosphate = a purine nucleobase + alpha-D-ribose 1-phosphate. It catalyses the reaction adenosine + phosphate = alpha-D-ribose 1-phosphate + adenine. The enzyme catalyses cytidine + phosphate = cytosine + alpha-D-ribose 1-phosphate. The catalysed reaction is guanosine + phosphate = alpha-D-ribose 1-phosphate + guanine. It carries out the reaction inosine + phosphate = alpha-D-ribose 1-phosphate + hypoxanthine. It catalyses the reaction thymidine + phosphate = 2-deoxy-alpha-D-ribose 1-phosphate + thymine. The enzyme catalyses uridine + phosphate = alpha-D-ribose 1-phosphate + uracil. The catalysed reaction is xanthosine + phosphate = alpha-D-ribose 1-phosphate + xanthine. Functionally, catalyzes the phosphorolysis of diverse nucleosides, yielding D-ribose 1-phosphate and the respective free bases. Can use uridine, adenosine, guanosine, cytidine, thymidine, inosine and xanthosine as substrates. Also catalyzes the reverse reactions. The polypeptide is Pyrimidine/purine nucleoside phosphorylase (Acinetobacter baylyi (strain ATCC 33305 / BD413 / ADP1)).